Consider the following 369-residue polypeptide: Flagellar P-ring protein 1 (369 aa).

A signal peptide spans 1–23 (MRKQSLVTLLMVLLSLVWLPASA).

The protein belongs to the FlgI family. The basal body constitutes a major portion of the flagellar organelle and consists of four rings (L,P,S, and M) mounted on a central rod.

Its subcellular location is the periplasm. The protein localises to the bacterial flagellum basal body. Assembles around the rod to form the L-ring and probably protects the motor/basal body from shearing forces during rotation. This Yersinia pseudotuberculosis serotype I (strain IP32953) protein is Flagellar P-ring protein 1.